The sequence spans 336 residues: Dihydroorotate dehydrogenase (quinone) (336 aa).

FMN-binding positions include 62-66 and T86; that span reads AGLDK. A substrate-binding site is contributed by K66. Position 111 to 115 (111 to 115) interacts with substrate; the sequence is NRMGF. Positions 139 and 172 each coordinate FMN. N172 contributes to the substrate binding site. S175 functions as the Nucleophile in the catalytic mechanism. N177 is a substrate binding site. Residues K217 and T245 each contribute to the FMN site. 246 to 247 contributes to the substrate binding site; that stretch reads NT. FMN contacts are provided by residues G268, G297, and 318 to 319; that span reads FS.

The protein belongs to the dihydroorotate dehydrogenase family. Type 2 subfamily. Monomer. It depends on FMN as a cofactor.

It is found in the cell membrane. It carries out the reaction (S)-dihydroorotate + a quinone = orotate + a quinol. The protein operates within pyrimidine metabolism; UMP biosynthesis via de novo pathway; orotate from (S)-dihydroorotate (quinone route): step 1/1. Catalyzes the conversion of dihydroorotate to orotate with quinone as electron acceptor. This is Dihydroorotate dehydrogenase (quinone) from Photorhabdus laumondii subsp. laumondii (strain DSM 15139 / CIP 105565 / TT01) (Photorhabdus luminescens subsp. laumondii).